The sequence spans 174 residues: Large ribosomal subunit protein uL18 (174 aa).

It belongs to the universal ribosomal protein uL18 family. In terms of assembly, part of the 50S ribosomal subunit. Contacts the 5S and 23S rRNAs.

In terms of biological role, this is one of the proteins that bind and probably mediate the attachment of the 5S RNA into the large ribosomal subunit, where it forms part of the central protuberance. The sequence is that of Large ribosomal subunit protein uL18 from Methanocorpusculum labreanum (strain ATCC 43576 / DSM 4855 / Z).